A 180-amino-acid chain; its full sequence is Large ribosomal subunit protein uL5 (180 aa).

The protein belongs to the universal ribosomal protein uL5 family. As to quaternary structure, part of the 50S ribosomal subunit; part of the 5S rRNA/L5/L18/L25 subcomplex. Contacts the 5S rRNA and the P site tRNA. Forms a bridge to the 30S subunit in the 70S ribosome.

In terms of biological role, this is one of the proteins that bind and probably mediate the attachment of the 5S RNA into the large ribosomal subunit, where it forms part of the central protuberance. In the 70S ribosome it contacts protein S13 of the 30S subunit (bridge B1b), connecting the 2 subunits; this bridge is implicated in subunit movement. Contacts the P site tRNA; the 5S rRNA and some of its associated proteins might help stabilize positioning of ribosome-bound tRNAs. This is Large ribosomal subunit protein uL5 from Leuconostoc mesenteroides subsp. mesenteroides (strain ATCC 8293 / DSM 20343 / BCRC 11652 / CCM 1803 / JCM 6124 / NCDO 523 / NBRC 100496 / NCIMB 8023 / NCTC 12954 / NRRL B-1118 / 37Y).